The primary structure comprises 398 residues: NADH-quinone oxidoreductase subunit D (398 aa).

Belongs to the complex I 49 kDa subunit family. As to quaternary structure, NDH-1 is composed of 14 different subunits. Subunits NuoB, C, D, E, F, and G constitute the peripheral sector of the complex.

It localises to the cell inner membrane. The enzyme catalyses a quinone + NADH + 5 H(+)(in) = a quinol + NAD(+) + 4 H(+)(out). In terms of biological role, NDH-1 shuttles electrons from NADH, via FMN and iron-sulfur (Fe-S) centers, to quinones in the respiratory chain. The immediate electron acceptor for the enzyme in this species is believed to be ubiquinone. Couples the redox reaction to proton translocation (for every two electrons transferred, four hydrogen ions are translocated across the cytoplasmic membrane), and thus conserves the redox energy in a proton gradient. The protein is NADH-quinone oxidoreductase subunit D of Anaplasma marginale (strain St. Maries).